The following is a 289-amino-acid chain: Acetyl-coenzyme A carboxylase carboxyl transferase subunit beta (289 aa).

A CoA carboxyltransferase N-terminal domain is found at 34 to 289; the sequence is MWVKCNKCGE…KLINMHQNSF (256 aa). 4 residues coordinate Zn(2+): C38, C41, C57, and C60. Residues 38-60 form a C4-type zinc finger; that stretch reads CNKCGEILYQNDLEKNYMVCNLC.

Belongs to the AccD/PCCB family. Acetyl-CoA carboxylase is a heterohexamer composed of biotin carboxyl carrier protein (AccB), biotin carboxylase (AccC) and two subunits each of ACCase subunit alpha (AccA) and ACCase subunit beta (AccD). Zn(2+) serves as cofactor.

It is found in the cytoplasm. The catalysed reaction is N(6)-carboxybiotinyl-L-lysyl-[protein] + acetyl-CoA = N(6)-biotinyl-L-lysyl-[protein] + malonyl-CoA. Its pathway is lipid metabolism; malonyl-CoA biosynthesis; malonyl-CoA from acetyl-CoA: step 1/1. Functionally, component of the acetyl coenzyme A carboxylase (ACC) complex. Biotin carboxylase (BC) catalyzes the carboxylation of biotin on its carrier protein (BCCP) and then the CO(2) group is transferred by the transcarboxylase to acetyl-CoA to form malonyl-CoA. The sequence is that of Acetyl-coenzyme A carboxylase carboxyl transferase subunit beta from Clostridium botulinum (strain ATCC 19397 / Type A).